The primary structure comprises 251 residues: CDP-diacylglycerol pyrophosphatase (251 aa).

Residues 4–24 (AGLLFLVMIVIAVVAAGIGYW) traverse the membrane as a helical segment.

Belongs to the Cdh family.

It is found in the cell inner membrane. It carries out the reaction a CDP-1,2-diacyl-sn-glycerol + H2O = a 1,2-diacyl-sn-glycero-3-phosphate + CMP + 2 H(+). The protein operates within phospholipid metabolism; CDP-diacylglycerol degradation; phosphatidate from CDP-diacylglycerol: step 1/1. The polypeptide is CDP-diacylglycerol pyrophosphatase (Escherichia coli (strain K12 / MC4100 / BW2952)).